The following is a 794-amino-acid chain: Protein sel-1 homolog 1 (794 aa).

The signal sequence occupies residues Met1 to Ala21. A disordered region spans residues Thr20–Ile91. An interaction with ERLEC1, OS9 and SYVN1 region spans residues Ser22 to Gln737. The Lumenal portion of the chain corresponds to Ser22–Leu738. Acidic residues-rich tracts occupy residues Ser23–Ser32 and Asp62–Glu77. The residue at position 63 (Ser63) is a Phosphoserine. One can recognise a Fibronectin type-II domain in the interval Ala122–Thr170. 2 disulfides stabilise this stretch: Cys127-Cys153 and Cys141-Cys168. 9 Sel1-like repeats span residues Ala183 to His218, Thr219 to Ser254, Pro255 to Asn290, Leu291 to Ala326, Val373 to Asn409, Ser410 to Asn446, Pro447 to Trp482, Val483 to His518, and Ile519 to Arg554. N-linked (GlcNAc...) asparagine glycans are attached at residues Asn195 and Asn217. An N-linked (GlcNAc...) asparagine glycan is attached at Asn272. The tract at residues Asn352–Arg537 is important for homodimerization and oligomerization. Asn431 carries N-linked (GlcNAc...) asparagine glycosylation. Residue Asn608 is glycosylated (N-linked (GlcNAc...) asparagine). Sel1-like repeat units lie at residues Thr627 to His662 and Ala664 to Pro699. An interaction with SYVN1 region spans residues Thr643–Glu723. Residues Leu738–Gln794 are mediates retention in the endoplasmic reticulum. The chain crosses the membrane as a helical span at residues Leu739 to Ile759. The Cytoplasmic segment spans residues Ala760–Gln794. Residues Asp768 to Gln794 form a disordered region. The segment covering Val771–Gln794 has biased composition (pro residues).

The protein belongs to the sel-1 family. As to quaternary structure, homodimer and homooligomer. May form a complex with ERLEC1, HSPA5, OS9, and SYVN1. Interacts with FOXRED2 and EDEM1. Interacts with LPL and LMF1; may stabilize the complex formed by LPL and LMF1 and thereby promote the export of LPL dimers. Component of the HRD1 complex, which comprises at least SYNV1/HRD1, DERL1/2, FAM8A1, HERPUD1/HERP, OS9, SEL1L and UBE2J1. SYNV1 assembles with SEL1L and FAM8A1 through its transmembrane domains, but interaction with its cytoplasmic domain is required to confer stability to FAM8A1 and enhance recruitment of HERPUD1. The interaction with SYNV1/HRD1 is direct. Post-translationally, N-glycosylated.

The protein localises to the endoplasmic reticulum membrane. Its function is as follows. Plays a role in the endoplasmic reticulum quality control (ERQC) system also called ER-associated degradation (ERAD) involved in ubiquitin-dependent degradation of misfolded endoplasmic reticulum proteins. Enhances SYVN1 stability. Plays a role in LPL maturation and secretion. Required for normal differentiation of the pancreas epithelium, and for normal exocrine function and survival of pancreatic cells. May play a role in Notch signaling. This chain is Protein sel-1 homolog 1 (Sel1l), found in Mesocricetus auratus (Golden hamster).